The primary structure comprises 433 residues: Coiled-coil domain-containing protein 71 (433 aa).

Position 125 is a phosphoserine (Ser125). Disordered stretches follow at residues Leu204–Ala256, Gln284–Val310, and Lys325–Gln396. Basic residues-rich tracts occupy residues Lys216–Thr230 and Val288–Ala306. Residues Lys260 to Lys330 are a coiled coil.

The sequence is that of Coiled-coil domain-containing protein 71 (Ccdc71) from Mus musculus (Mouse).